A 247-amino-acid chain; its full sequence is MKVNPKNSPKDNLKDSPKVSARGKKVNKAWLHDHINDPYVKLAQKEGYRARAAYKLKEIDETLGLIKPGDCVVDLGSTPGAWSQYVRRKLSPTGAAAGELNGRIIGLDMLPMEPIEGVAFIQGDFREPEVLQKLEQALATDKGQVKVDLVISDMAPNLSGIESADAARIVHLVELAVEFAQNRMKPDGTLVVKLFHGSGYDELVKLFRATFKVVKPMKPKASRSNSSETFLVGKGLKKRAETVPELA.

Positions 1–21 (MKVNPKNSPKDNLKDSPKVSA) are disordered. Basic and acidic residues predominate over residues 8 to 17 (SPKDNLKDSP). S-adenosyl-L-methionine-binding residues include G80, W82, D108, D124, and D153. K193 acts as the Proton acceptor in catalysis.

It belongs to the class I-like SAM-binding methyltransferase superfamily. RNA methyltransferase RlmE family.

It localises to the cytoplasm. The catalysed reaction is uridine(2552) in 23S rRNA + S-adenosyl-L-methionine = 2'-O-methyluridine(2552) in 23S rRNA + S-adenosyl-L-homocysteine + H(+). Specifically methylates the uridine in position 2552 of 23S rRNA at the 2'-O position of the ribose in the fully assembled 50S ribosomal subunit. The polypeptide is Ribosomal RNA large subunit methyltransferase E (Polaromonas sp. (strain JS666 / ATCC BAA-500)).